Reading from the N-terminus, the 379-residue chain is Nitric oxide reductase FlRd-NAD(+) reductase (379 aa).

It belongs to the FAD-dependent oxidoreductase family. The cofactor is FAD.

Its subcellular location is the cytoplasm. It catalyses the reaction 2 reduced [nitric oxide reductase rubredoxin domain] + NAD(+) + H(+) = 2 oxidized [nitric oxide reductase rubredoxin domain] + NADH. The protein operates within nitrogen metabolism; nitric oxide reduction. Functionally, one of at least two accessory proteins for anaerobic nitric oxide (NO) reductase. Reduces the rubredoxin moiety of NO reductase. This Pectobacterium atrosepticum (strain SCRI 1043 / ATCC BAA-672) (Erwinia carotovora subsp. atroseptica) protein is Nitric oxide reductase FlRd-NAD(+) reductase.